The following is a 1321-amino-acid chain: Serine/threonine-protein kinase SIK3 (1321 aa).

The disordered stretch occupies residues 1–59; the sequence is MAAAAASGAGGAAGAGTGGAGPAGRLLPPPAPGSPAAPAAVSPAAGQPRPPAPASRGPM. Residues 8 to 22 are compositionally biased toward gly residues; that stretch reads GAGGAAGAGTGGAGP. Over residues 36 to 47 the composition is skewed to low complexity; that stretch reads AAPAAVSPAAGQ. Residues 66-317 form the Protein kinase domain; that stretch reads YEIDRTIGKG…MEQICKHKWM (252 aa). Phosphothreonine is present on Thr71. ATP contacts are provided by residues 72-80 and Lys95; that span reads IGKGNFAVV. Glu113 is subject to Phosphothreonine. The active-site Proton acceptor is the Asp188. Thr221 is subject to Phosphothreonine; by LKB1. Positions 344–384 constitute a UBA domain; that stretch reads PLNEDVLLAMEDMGLDKEQTLQSLRSDAYDHYSAIYSLLCD. Thr469 is modified (phosphothreonine). A phosphoserine mark is found at Ser551, Ser591, and Ser592. The segment at 585–614 is disordered; that stretch reads TPVDEESSDGEPDQEAVQSSTYKDSNTLHL. Over residues 587–598 the composition is skewed to acidic residues; it reads VDEESSDGEPDQ. A compositionally biased stretch (polar residues) spans 600-613; sequence AVQSSTYKDSNTLH. Ser626 and Ser647 each carry phosphoserine. The tract at residues 727-772 is disordered; sequence IQPSSPPPNHPNNHLFRQPSNSPPPMSSAMIQPHGAASSSQFQGLP. The segment covering 763–772 has biased composition (polar residues); that stretch reads ASSSQFQGLP. Ser866 is subject to Phosphoserine. The segment at 894–945 is disordered; sequence LFSDQSRGSPSSYSPSTGVGFSPTQALKVPPLDQFPTFPPSAHQQPPHYTTS. Residues 896-909 are compositionally biased toward low complexity; the sequence is SDQSRGSPSSYSPS. The segment covering 935–945 has biased composition (polar residues); sequence AHQQPPHYTTS. Ser978 bears the Phosphoserine mark. At Arg986 the chain carries Omega-N-methylarginine. A compositionally biased stretch (polar residues) spans 1256–1265; the sequence is SLMGSQQFQD. Residues 1256–1289 form a disordered region; it reads SLMGSQQFQDGENEECGASLGGHEHPDLSDGSQH.

The protein belongs to the protein kinase superfamily. CAMK Ser/Thr protein kinase family. SNF1 subfamily. Binds to and is activated by YWHAZ when phosphorylated on Thr-221. Interacts with 14-3-3 proteins. Interacts with HDAC4; this interaction leads to HDAC4 retention in the cytoplasm. Interacts with DEPTOR, MLST8/GbetaL, RICTOR and RPTOR. Mg(2+) is required as a cofactor. In terms of processing, phosphorylated at Thr-221 by STK11/LKB1 in complex with STE20-related adapter-alpha (STRADA) pseudo kinase and CAB39. Phosphorylation at Thr-221 is inhibited in response to PTHLH/PTHrP. Phosphorylated at Thr-469 and Ser-551 in response to cAMP signaling. Expressed in chondrocytes.

The protein localises to the cytoplasm. The enzyme catalyses L-seryl-[protein] + ATP = O-phospho-L-seryl-[protein] + ADP + H(+). It catalyses the reaction L-threonyl-[protein] + ATP = O-phospho-L-threonyl-[protein] + ADP + H(+). Its activity is regulated as follows. Activated by phosphorylation on Thr-221. Positive regulator of mTOR signaling that functions by triggering the degradation of DEPTOR, an mTOR inhibitor. Involved in the dynamic regulation of mTOR signaling in chondrocyte differentiation during skeletogenesis. Negatively regulates cAMP signaling pathway possibly by acting on CRTC2/TORC2 and CRTC3/TORC3. Prevents HDAC4 translocation to the nucleus. The sequence is that of Serine/threonine-protein kinase SIK3 from Homo sapiens (Human).